The following is a 757-amino-acid chain: MDVNPTLLFLKVPAQNAISTTFPYTGDPPYSHGTGTGYTMDTVNRTHQYSEKGKWTTNTETGAPQLNPIDGPLPEDNEPSGYAQTDCVLEAMAFLEESHPGIFENSCLETMEVVQQTRVDKLTQGRQTYDWTLNRNQPAATALANTIEVFRSNGLTANESGRLIDFLKDVMESMDKEEMEITTHFQRKRRVRDNMTKKMVTQRTIGKKKQRLNKRSYLIRALTLNTMTKDAERGKLKRRAIATPGMQIRGFVYFVETLARSICEKLEQSGLPVGGNEKKAKLANVVRKMMTNSQDTELSFTITGDNTKWNENQNPRMFLAMITYITRNQPEWFRNVLSIAPIMFSNKMARLGKGYMFESKSMKLRTQIPTEMLASIDLKYFNEPTRKKIEKIRPLLIDGTASLSPGMMMGMFNMLSTVLGVSILNLGQKRYTKTTYWWDGLQSSDDFALIVNAPDHEGIQAGVDRFYRTCKLVGINMSKKKSYINRTGTFEFTSFFYRYGFVANFSMELPSFGVSGINESADMSIGVTVIKNNMINNDLGPATAQMALQLFIKDYRYTYRCHRGDTQIQTRRSFELKKLWEQTRSKAGLLVSDGGPNLYNIRNLHIPEVCLKWELMDEDYQGRLCNPLNPFVSHKEIESVNNAVVMPAHGPAKSMEYDAVATTHSWIPKRNRSILNTSQRGILEDEQMYQKCCNLFEKFFPSSSYRRPVGISSMVEAMVSRARIDARIDFESGRIKKEEFAEIMKICSTIEELRRQK.

Residues 50-82 (SEKGKWTTNTETGAPQLNPIDGPLPEDNEPSGY) form a disordered region. Residues 55-64 (WTTNTETGAP) show a composition bias toward polar residues. 2 consecutive short sequence motifs (nuclear localization signal) follow at residues 187-195 (RKRRVRDNM) and 203-216 (RTIGKKKQRLNKRS). The interval 249-256 (RGFVYFVE) is promoter-binding site. The RdRp catalytic domain maps to 286–483 (VRKMMTNSQD…GINMSKKKSY (198 aa)).

It belongs to the influenza viruses polymerase PB1 family. Influenza RNA polymerase is composed of three subunits: PB1, PB2 and PA. Interacts (via N-terminus) with PA (via C-terminus). Interacts (via C-terminus) with PB2 (via N-terminus); this interaction is essential for transcription initiation. Phosphorylated by host PRKCA.

It is found in the host nucleus. The protein localises to the host cytoplasm. It carries out the reaction RNA(n) + a ribonucleoside 5'-triphosphate = RNA(n+1) + diphosphate. Functionally, RNA-dependent RNA polymerase which is responsible for replication and transcription of virus RNA segments. The transcription of viral mRNAs occurs by a unique mechanism called cap-snatching. 5' methylated caps of cellular mRNAs are cleaved after 10-13 nucleotides by PA. In turn, these short capped RNAs are used as primers by PB1 for transcription of viral mRNAs. During virus replication, PB1 initiates RNA synthesis and copy vRNA into complementary RNA (cRNA) which in turn serves as a template for the production of more vRNAs. The chain is RNA-directed RNA polymerase catalytic subunit from Aves.